The following is a 222-amino-acid chain: Adenylate kinase (222 aa).

Residue serine 2 is a propeptide, removed in mature form. N-acetylserine is present on residues serine 2 and serine 3. 16–21 (GAGKGT) contributes to the ATP binding site. The NMP stretch occupies residues 36–65 (ATGDMLRSQIAKGTQLGLEAKKIMDQGGLV). AMP-binding positions include threonine 37, arginine 42, 63 to 65 (GLV), 92 to 95 (GFPR), and glutamine 99. The tract at residues 133–170 (GRLIHPASGRSYHKIFNPPKEDMKDDVTGEALVQRSDD) is LID. ATP-binding positions include arginine 134 and 143-144 (SY). AMP is bound by residues arginine 167 and arginine 178. Position 206 (glutamine 206) interacts with ATP.

Belongs to the adenylate kinase family. AK2 subfamily. In terms of assembly, monomer.

The protein resides in the cytoplasm. Its subcellular location is the cytosol. It localises to the mitochondrion intermembrane space. It carries out the reaction AMP + ATP = 2 ADP. In terms of biological role, catalyzes the reversible transfer of the terminal phosphate group between ATP and AMP. Plays an important role in cellular energy homeostasis and in adenine nucleotide metabolism. Adenylate kinase activity is critical for regulation of the phosphate utilization and the AMP de novo biosynthesis pathways. This chain is Adenylate kinase, found in Saccharomyces cerevisiae (strain YJM789) (Baker's yeast).